The chain runs to 329 residues: Glycerol-3-phosphate dehydrogenase [NAD(P)+] (329 aa).

Serine 10, tryptophan 11, arginine 31, and lysine 105 together coordinate NADPH. Lysine 105, glycine 134, and serine 136 together coordinate sn-glycerol 3-phosphate. Alanine 138 serves as a coordination point for NADPH. The sn-glycerol 3-phosphate site is built by lysine 189, aspartate 242, serine 252, arginine 253, and asparagine 254. The Proton acceptor role is filled by lysine 189. NADPH is bound at residue arginine 253. NADPH contacts are provided by valine 277 and glutamate 279.

This sequence belongs to the NAD-dependent glycerol-3-phosphate dehydrogenase family.

It localises to the cytoplasm. The enzyme catalyses sn-glycerol 3-phosphate + NAD(+) = dihydroxyacetone phosphate + NADH + H(+). It catalyses the reaction sn-glycerol 3-phosphate + NADP(+) = dihydroxyacetone phosphate + NADPH + H(+). It participates in membrane lipid metabolism; glycerophospholipid metabolism. Functionally, catalyzes the reduction of the glycolytic intermediate dihydroxyacetone phosphate (DHAP) to sn-glycerol 3-phosphate (G3P), the key precursor for phospholipid synthesis. In Neisseria meningitidis serogroup C (strain 053442), this protein is Glycerol-3-phosphate dehydrogenase [NAD(P)+].